The following is a 505-amino-acid chain: Bifunctional pantoate ligase/cytidylate kinase (505 aa).

The pantoate--beta-alanine ligase stretch occupies residues 1-268; the sequence is MHQWRKHQQS…CGETRLIDHT (268 aa). An ATP-binding site is contributed by 18–25; sequence MGALHRGH. The active-site Proton donor is the histidine 25. Glutamine 53 provides a ligand contact to (R)-pantoate. Glutamine 53 is a binding site for beta-alanine. Position 142–145 (142–145) interacts with ATP; the sequence is GEKD. Glutamine 148 provides a ligand contact to (R)-pantoate. ATP-binding positions include valine 171 and 179–182; that span reads CSSR. Positions 269-505 are cytidylate kinase; the sequence is FLMSRQPIVA…PEEVWPTAGR (237 aa).

In the N-terminal section; belongs to the pantothenate synthetase family. The protein in the C-terminal section; belongs to the cytidylate kinase family. Type 1 subfamily.

Its subcellular location is the cytoplasm. It catalyses the reaction (R)-pantoate + beta-alanine + ATP = (R)-pantothenate + AMP + diphosphate + H(+). The enzyme catalyses CMP + ATP = CDP + ADP. The catalysed reaction is dCMP + ATP = dCDP + ADP. It functions in the pathway cofactor biosynthesis; (R)-pantothenate biosynthesis; (R)-pantothenate from (R)-pantoate and beta-alanine: step 1/1. Its function is as follows. Catalyzes the condensation of pantoate with beta-alanine in an ATP-dependent reaction via a pantoyl-adenylate intermediate. Functionally, catalyzes the transfer of a phosphate group from ATP to either CMP or dCMP to form CDP or dCDP and ADP, respectively. This chain is Bifunctional pantoate ligase/cytidylate kinase, found in Prochlorococcus marinus (strain MIT 9313).